Reading from the N-terminus, the 335-residue chain is Serpentine receptor class gamma-11 (335 aa).

The next 7 helical transmembrane spans lie at 33–53 (FLQI…LYTI), 66–86 (FFLI…LDII), 98–118 (PIIA…MIVL), 154–174 (LKYL…NLII), 202–222 (FQLI…SVIF), 242–262 (GTAY…LFAF), and 271–291 (TIFG…PIIM).

The protein belongs to the nematode receptor-like protein srg family.

It is found in the membrane. In Caenorhabditis elegans, this protein is Serpentine receptor class gamma-11 (srg-11).